A 541-amino-acid chain; its full sequence is Arginine--tRNA ligase (541 aa).

The 'HIGH' region signature appears at 119 to 129 (ANPTGPLHIGH).

It belongs to the class-I aminoacyl-tRNA synthetase family. Monomer.

The protein localises to the cytoplasm. The enzyme catalyses tRNA(Arg) + L-arginine + ATP = L-arginyl-tRNA(Arg) + AMP + diphosphate. This chain is Arginine--tRNA ligase, found in Helicobacter pylori (strain P12).